A 1116-amino-acid chain; its full sequence is Protein translocase subunit SecA (1116 aa).

Residues Gln176, 194-198 (GEGKT), and Asp693 contribute to the ATP site.

It belongs to the SecA family. As to quaternary structure, monomer and homodimer. Part of the essential Sec protein translocation apparatus which comprises SecA, SecYEG and auxiliary proteins SecDF. Other proteins may also be involved.

The protein localises to the cell inner membrane. It localises to the cytoplasm. It carries out the reaction ATP + H2O + cellular proteinSide 1 = ADP + phosphate + cellular proteinSide 2.. In terms of biological role, part of the Sec protein translocase complex. Interacts with the SecYEG preprotein conducting channel. Has a central role in coupling the hydrolysis of ATP to the transfer of proteins into and across the cell membrane, serving as an ATP-driven molecular motor driving the stepwise translocation of polypeptide chains across the membrane. This Amoebophilus asiaticus (strain 5a2) protein is Protein translocase subunit SecA.